Here is a 479-residue protein sequence, read N- to C-terminus: Putative L-cysteine desulfhydrase 2 (479 aa).

Residues 1-36 (MASLQSGGDAAANGVDADVDGAASPPSAKRPRAGAG) form a disordered region. Residues 7 to 36 (GGDAAANGVDADVDGAASPPSAKRPRAGAG) show a composition bias toward low complexity. Residue Lys270 is modified to N6-(pyridoxal phosphate)lysine.

It belongs to the class-V pyridoxal-phosphate-dependent aminotransferase family. Requires pyridoxal 5'-phosphate as cofactor.

The enzyme catalyses L-cysteine + H2O = hydrogen sulfide + pyruvate + NH4(+) + H(+). Its function is as follows. Catalyzes the production of hydrogen sulfide (H2S) from cysteine. The protein is Putative L-cysteine desulfhydrase 2 of Oryza sativa subsp. japonica (Rice).